A 278-amino-acid chain; its full sequence is ATP synthase subunit delta (278 aa).

Belongs to the ATPase delta chain family. As to quaternary structure, F-type ATPases have 2 components, F(1) - the catalytic core - and F(0) - the membrane proton channel. F(1) has five subunits: alpha(3), beta(3), gamma(1), delta(1), epsilon(1). F(0) has three main subunits: a(1), b(2) and c(10-14). The alpha and beta chains form an alternating ring which encloses part of the gamma chain. F(1) is attached to F(0) by a central stalk formed by the gamma and epsilon chains, while a peripheral stalk is formed by the delta and b chains.

It localises to the cell membrane. F(1)F(0) ATP synthase produces ATP from ADP in the presence of a proton or sodium gradient. F-type ATPases consist of two structural domains, F(1) containing the extramembraneous catalytic core and F(0) containing the membrane proton channel, linked together by a central stalk and a peripheral stalk. During catalysis, ATP synthesis in the catalytic domain of F(1) is coupled via a rotary mechanism of the central stalk subunits to proton translocation. Its function is as follows. This protein is part of the stalk that links CF(0) to CF(1). It either transmits conformational changes from CF(0) to CF(1) or is implicated in proton conduction. This chain is ATP synthase subunit delta, found in Rhodococcus opacus (strain B4).